Here is a 406-residue protein sequence, read N- to C-terminus: 3-oxoacyl-[acyl-carrier-protein] synthase 1 (406 aa).

The Ketosynthase family 3 (KS3) domain occupies Met-1–Arg-403. Active-site for beta-ketoacyl synthase activity residues include Cys-162, His-297, and His-332.

Belongs to the thiolase-like superfamily. Beta-ketoacyl-ACP synthases family. As to quaternary structure, homodimer.

The protein localises to the cytoplasm. It catalyses the reaction a fatty acyl-[ACP] + malonyl-[ACP] + H(+) = a 3-oxoacyl-[ACP] + holo-[ACP] + CO2. The enzyme catalyses (3Z)-decenoyl-[ACP] + malonyl-[ACP] + H(+) = 3-oxo-(5Z)-dodecenoyl-[ACP] + holo-[ACP] + CO2. The protein operates within lipid metabolism; fatty acid biosynthesis. Functionally, involved in the type II fatty acid elongation cycle. Catalyzes the elongation of a wide range of acyl-ACP by the addition of two carbons from malonyl-ACP to an acyl acceptor. Can also use unsaturated fatty acids. Catalyzes a key reaction in unsaturated fatty acid (UFA) synthesis, the elongation of the cis-3-decenoyl-ACP produced by FabA. This Haemophilus influenzae (strain ATCC 51907 / DSM 11121 / KW20 / Rd) protein is 3-oxoacyl-[acyl-carrier-protein] synthase 1 (fabB).